The sequence spans 403 residues: 4-hydroxy-3-methylbut-2-enyl diphosphate reductase (403 aa).

C66 provides a ligand contact to [4Fe-4S] cluster. Residue H96 participates in (2E)-4-hydroxy-3-methylbut-2-enyl diphosphate binding. H96 contacts dimethylallyl diphosphate. An isopentenyl diphosphate-binding site is contributed by H96. C157 contacts [4Fe-4S] cluster. A (2E)-4-hydroxy-3-methylbut-2-enyl diphosphate-binding site is contributed by H185. Residue H185 participates in dimethylallyl diphosphate binding. Isopentenyl diphosphate is bound at residue H185. E187 functions as the Proton donor in the catalytic mechanism. T250 is a binding site for (2E)-4-hydroxy-3-methylbut-2-enyl diphosphate. A [4Fe-4S] cluster-binding site is contributed by C288. Residues S317, S318, N319, and S379 each coordinate (2E)-4-hydroxy-3-methylbut-2-enyl diphosphate. 4 residues coordinate dimethylallyl diphosphate: S317, S318, N319, and S379. Isopentenyl diphosphate-binding residues include S317, S318, N319, and S379.

The protein belongs to the IspH family. [4Fe-4S] cluster is required as a cofactor.

The enzyme catalyses isopentenyl diphosphate + 2 oxidized [2Fe-2S]-[ferredoxin] + H2O = (2E)-4-hydroxy-3-methylbut-2-enyl diphosphate + 2 reduced [2Fe-2S]-[ferredoxin] + 2 H(+). It carries out the reaction dimethylallyl diphosphate + 2 oxidized [2Fe-2S]-[ferredoxin] + H2O = (2E)-4-hydroxy-3-methylbut-2-enyl diphosphate + 2 reduced [2Fe-2S]-[ferredoxin] + 2 H(+). Its pathway is isoprenoid biosynthesis; dimethylallyl diphosphate biosynthesis; dimethylallyl diphosphate from (2E)-4-hydroxy-3-methylbutenyl diphosphate: step 1/1. It functions in the pathway isoprenoid biosynthesis; isopentenyl diphosphate biosynthesis via DXP pathway; isopentenyl diphosphate from 1-deoxy-D-xylulose 5-phosphate: step 6/6. Catalyzes the conversion of 1-hydroxy-2-methyl-2-(E)-butenyl 4-diphosphate (HMBPP) into a mixture of isopentenyl diphosphate (IPP) and dimethylallyl diphosphate (DMAPP). Acts in the terminal step of the DOXP/MEP pathway for isoprenoid precursor biosynthesis. The chain is 4-hydroxy-3-methylbut-2-enyl diphosphate reductase from Picosynechococcus sp. (strain ATCC 27264 / PCC 7002 / PR-6) (Agmenellum quadruplicatum).